A 531-amino-acid polypeptide reads, in one-letter code: Berberine bridge enzyme-like 9 (531 aa).

The N-terminal stretch at 1–23 (MTSLTTQTLIITIFLLTIPTSFA) is a signal peptide. Cysteine 35 and cysteine 99 are joined by a disulfide. Residues asparagine 76, asparagine 164, asparagine 271, asparagine 300, asparagine 314, asparagine 400, and asparagine 485 are each glycosylated (N-linked (GlcNAc...) asparagine). The FAD-binding PCMH-type domain maps to 77 to 252 (MTRKPVAIVA…LAWKIKLVPV (176 aa)). Positions 114 to 177 (HDYDGMSYLS…DLRGFPAGIC (64 aa)) form a cross-link, 6-(S-cysteinyl)-8alpha-(pros-histidyl)-FAD (His-Cys).

Belongs to the oxygen-dependent FAD-linked oxidoreductase family. FAD serves as cofactor. The FAD cofactor is bound via a bicovalent 6-S-cysteinyl, 8alpha-N1-histidyl FAD linkage. In terms of tissue distribution, accumulates in cell walls of etiolated hypocotyls.

The protein localises to the secreted. The protein resides in the cell wall. This chain is Berberine bridge enzyme-like 9, found in Arabidopsis thaliana (Mouse-ear cress).